The following is a 229-amino-acid chain: Sorting nexin-10A (229 aa).

Residues 11-128 enclose the PX domain; it reads FISVWVRDPQ…HLFLQSQLSI (118 aa). Residues R54 and R95 each contribute to the a 1,2-diacyl-sn-glycero-3-phospho-(1D-myo-inositol-3-phosphate) site.

It belongs to the sorting nexin family.

It localises to the cytoplasm. The protein resides in the endosome membrane. Its subcellular location is the cytoskeleton. It is found in the microtubule organizing center. The protein localises to the centrosome. In terms of biological role, probable phosphoinositide-binding protein involved in protein sorting and membrane trafficking in endosomes. May play a role in cilium biogenesis through regulation of the transport and the localization of proteins to the cilium. The protein is Sorting nexin-10A (snx10a) of Danio rerio (Zebrafish).